We begin with the raw amino-acid sequence, 195 residues long: MAFVLSLLMALVLVSYGPGGSLGCYLSQRLMLDARENLRLLDRMNRLSPHSCLQDRKDFGLPQEMVEGDQLQEAQAFCVLYEMLQQSFNLFHTERSSAAWNTTLLEQLCTGLQQQLEDLDTCRGPVMGEKDSELGKMDPIVTVKKYFQGIHFYLKEKEYSDCAWEIVRVEMMRALSSSTSLQERLRKMGGDLNSP.

Residues 1–23 (MAFVLSLLMALVLVSYGPGGSLG) form the signal peptide. Cystine bridges form between C24–C122 and C52–C162. A glycan (N-linked (GlcNAc...) asparagine) is linked at N101.

This sequence belongs to the alpha/beta interferon family. IFN-alphaII subfamily. In terms of tissue distribution, constitutively and exclusively expressed in the mononuclear cells of the extraembryonic trophectoderm.

The protein localises to the secreted. Functionally, paracrine hormone primarily responsible for maternal recognition of pregnancy. Interacts with endometrial receptors, probably type I interferon receptors, and blocks estrogen receptor expression, preventing the estrogen-induced increase in oxytocin receptor expression in the endometrium. This results in the suppression of the pulsatile endometrial release of the luteolytic hormone prostaglandin F2-alpha, hindering the regression of the corpus luteum (luteolysis) and therefore a return to ovarian cyclicity. This, and a possible direct effect of IFN-tau on prostaglandin synthesis, leads in turn to continued ovarian progesterone secretion, which stimulates the secretion by the endometrium of the nutrients required for the growth of the conceptus. In summary, displays particularly high antiviral and antiproliferative potency concurrently with particular weak cytotoxicity, high antiluteolytic activity and immunomodulatory properties. In contrast with other IFNs, IFN-tau is not virally inducible. The sequence is that of Interferon tau-11 (IFNT11) from Ovis aries (Sheep).